Reading from the N-terminus, the 525-residue chain is Chromosomal replication initiator protein DnaA (525 aa).

The interval 1–71 (MNDFWQHCSA…ADLAREFWNT (71 aa)) is domain I, interacts with DnaA modulators. The tract at residues 71–188 (TPIEVQFVLD…GEADSMYERS (118 aa)) is domain II. Residues 160–182 (AAAGRRTWRPGPGAAPANGGEAD) are disordered. Positions 169 to 181 (PGPGAAPANGGEA) are enriched in low complexity. Residues 189–405 (KLNPVLTFDN…GALRKILAYS (217 aa)) form a domain III, AAA+ region region. ATP is bound by residues Gly-233, Gly-235, Lys-236, and Thr-237. Residues 406 to 525 (KFHGREISIE…LHVLEQTLKG (120 aa)) form a domain IV, binds dsDNA region.

This sequence belongs to the DnaA family. In terms of assembly, oligomerizes as a right-handed, spiral filament on DNA at oriC.

Its subcellular location is the cytoplasm. Functionally, plays an essential role in the initiation and regulation of chromosomal replication. ATP-DnaA binds to the origin of replication (oriC) to initiate formation of the DNA replication initiation complex once per cell cycle. Binds the DnaA box (a 9 base pair repeat at the origin) and separates the double-stranded (ds)DNA. Forms a right-handed helical filament on oriC DNA; dsDNA binds to the exterior of the filament while single-stranded (ss)DNA is stabiized in the filament's interior. The ATP-DnaA-oriC complex binds and stabilizes one strand of the AT-rich DNA unwinding element (DUE), permitting loading of DNA polymerase. After initiation quickly degrades to an ADP-DnaA complex that is not apt for DNA replication. Binds acidic phospholipids. The sequence is that of Chromosomal replication initiator protein DnaA from Burkholderia cenocepacia (strain ATCC BAA-245 / DSM 16553 / LMG 16656 / NCTC 13227 / J2315 / CF5610) (Burkholderia cepacia (strain J2315)).